We begin with the raw amino-acid sequence, 176 residues long: Ribosome maturation factor RimM (176 aa).

The region spanning 100 to 172 (PDTYYDHQLV…IVEIDPPHGL (73 aa)) is the PRC barrel domain.

This sequence belongs to the RimM family. Binds ribosomal protein uS19.

It is found in the cytoplasm. An accessory protein needed during the final step in the assembly of 30S ribosomal subunit, possibly for assembly of the head region. Essential for efficient processing of 16S rRNA. May be needed both before and after RbfA during the maturation of 16S rRNA. It has affinity for free ribosomal 30S subunits but not for 70S ribosomes. This chain is Ribosome maturation factor RimM, found in Mycobacterium bovis (strain ATCC BAA-935 / AF2122/97).